We begin with the raw amino-acid sequence, 88 residues long: Beta-insect excitatory toxin LqhIT1d (88 aa).

The N-terminal stretch at 1–18 is a signal peptide; sequence MKFFLLFLVVLPIMGVLG. One can recognise an LCN-type CS-alpha/beta domain in the interval 20–83; that stretch reads KNGFAVDSNG…ISDTRKKLCD (64 aa). 4 disulfides stabilise this stretch: C34–C55, C40–C60, C44–C62, and C56–C82.

The protein belongs to the long (4 C-C) scorpion toxin superfamily. Sodium channel inhibitor family. Beta subfamily. Expressed by the venom gland.

Its subcellular location is the secreted. Its function is as follows. Excitatory insect toxins induce a spastic paralysis. They bind voltage-independently at site-4 of sodium channels (Nav) and shift the voltage of activation toward more negative potentials thereby affecting sodium channel activation and promoting spontaneous and repetitive firing. This is Beta-insect excitatory toxin LqhIT1d from Leiurus hebraeus (Hebrew deathstalker scorpion).